A 188-amino-acid chain; its full sequence is dCTP deaminase (188 aa).

DCTP-binding positions include 111–116 (KSTYAR), 135–137 (TLE), Gln-156, Tyr-170, and Gln-180. Glu-137 serves as the catalytic Proton donor/acceptor.

The protein belongs to the dCTP deaminase family. Homotrimer.

It catalyses the reaction dCTP + H2O + H(+) = dUTP + NH4(+). Its pathway is pyrimidine metabolism; dUMP biosynthesis; dUMP from dCTP (dUTP route): step 1/2. Catalyzes the deamination of dCTP to dUTP. This is dCTP deaminase from Pseudomonas putida (strain ATCC 700007 / DSM 6899 / JCM 31910 / BCRC 17059 / LMG 24140 / F1).